The following is a 490-amino-acid chain: UDP-glucosyl transferase 73M2 (490 aa).

The Proton acceptor role is filled by His-20. Asp-124 functions as the Charge relay in the catalytic mechanism. Residues Ser-297, Trp-353, Ala-354, His-371, Asn-375, Ser-376, Glu-379, and Tyr-393 each contribute to the UDP site.

Belongs to the UDP-glycosyltransferase family. As to expression, mainly expressed in flowers, flower buds and young leaves, and, to a lesser extent, in old leaves, stems and roots.

It participates in secondary metabolite biosynthesis; terpenoid biosynthesis. Functionally, component of the oleanane-type triterpene saponins (e.g. saponarioside A and saponarioside B) biosynthetic pathway, leading to the production of natural products with detergent properties used as traditional sources of soap. A glycosyltransferase that mediates the conversion of QA-triFRX to QA-triFRXX via the elongation of the C-28 sugar chain with a D-xylose. This Saponaria officinalis (Common soapwort) protein is UDP-glucosyl transferase 73M2.